Consider the following 544-residue polypeptide: Matrilin-1 (544 aa).

The signal sequence occupies residues 1 to 26 (MRALSGPRLMLCGLLLLLFQAPCALG). The VWFA 1 domain maps to 42–217 (DLVFVVDSSR…SVIEKLSKKF (176 aa)). The N-linked (GlcNAc...) asparagine glycan is linked to Asn-77. An EGF-like domain is found at 224-264 (VSDLCATGDHDCEQVCVSSPGSYTCACREGFTLNSDGKTCN). 3 disulfide bridges follow: Cys-228/Cys-239, Cys-235/Cys-248, and Cys-250/Cys-263. The VWFA 2 domain maps to 276 to 448 (DLVFLIDGSK…KTINQIGKKL (173 aa)). Asn-345 is a glycosylation site (N-linked (GlcNAc...) asparagine).

In terms of assembly, homotrimer. Part of a complex composed of MATN1 (via VWFA1 domain), type 2 collagens and type 6 collagens. Forms a complex (via covalent bonds) with ACAN; the interaction increases in abundance with increasing age of the organism via an increase in occupancy of MATN1 binding sites. Interacts with COMP. In terms of processing, N-glycosylated; reduces binding affinity for type 2 collagens. In terms of tissue distribution, expressed in trachea from fetus into adulthood (at protein level).

The protein resides in the secreted. The protein localises to the extracellular space. Its subcellular location is the extracellular matrix. Functionally, a major component of the extracellular matrix of non-articular cartilage. Binds to type 2 collagens and forms long concatenated protein networks as part of the extracellular matrix. Required for the network-like organization and bundling of collagen fibrils surrounding chondrocytes in the zones of maturation and hypertrophy. Required for mechanotransduction and adaption to mechanical loading in cartilage chondrocytes, resulting in an increase in expression of the extracellular matrix components ACAN and COL2A1. Acts as a moderator of angiogenesis in response to injury. This Bos taurus (Bovine) protein is Matrilin-1.